Reading from the N-terminus, the 417-residue chain is UDP-N-acetylglucosamine 1-carboxyvinyltransferase (417 aa).

22 to 23 (KN) contacts phosphoenolpyruvate. R92 serves as a coordination point for UDP-N-acetyl-alpha-D-glucosamine. C116 acts as the Proton donor in catalysis. The residue at position 116 (C116) is a 2-(S-cysteinyl)pyruvic acid O-phosphothioketal. Residues D304 and I326 each coordinate UDP-N-acetyl-alpha-D-glucosamine.

This sequence belongs to the EPSP synthase family. MurA subfamily.

It localises to the cytoplasm. The catalysed reaction is phosphoenolpyruvate + UDP-N-acetyl-alpha-D-glucosamine = UDP-N-acetyl-3-O-(1-carboxyvinyl)-alpha-D-glucosamine + phosphate. The protein operates within cell wall biogenesis; peptidoglycan biosynthesis. Its function is as follows. Cell wall formation. Adds enolpyruvyl to UDP-N-acetylglucosamine. The sequence is that of UDP-N-acetylglucosamine 1-carboxyvinyltransferase from Desulfosudis oleivorans (strain DSM 6200 / JCM 39069 / Hxd3) (Desulfococcus oleovorans).